Reading from the N-terminus, the 168-residue chain is 3-isopropylmalate dehydratase small subunit 2 (168 aa).

This sequence belongs to the LeuD family. LeuD type 2 subfamily. In terms of assembly, heterodimer of LeuC and LeuD.

The enzyme catalyses (2R,3S)-3-isopropylmalate = (2S)-2-isopropylmalate. Its pathway is amino-acid biosynthesis; L-leucine biosynthesis; L-leucine from 3-methyl-2-oxobutanoate: step 2/4. Catalyzes the isomerization between 2-isopropylmalate and 3-isopropylmalate, via the formation of 2-isopropylmaleate. This is 3-isopropylmalate dehydratase small subunit 2 (leuD2) from Methanopyrus kandleri (strain AV19 / DSM 6324 / JCM 9639 / NBRC 100938).